Reading from the N-terminus, the 105-residue chain is Secreted RxLR effector protein 158 (105 aa).

A signal peptide spans 1 to 22 (MRGAHYVAIVLLVAAGGQTAAG). A RxLR-dEER motif is present at residues 50-71 (RALQASRNPKDDLMFSAGDEER).

The protein belongs to the RxLR effector family.

The protein resides in the secreted. It is found in the host nucleus. Its subcellular location is the host cytoplasm. In terms of biological role, secreted effector that partially suppresses the host cell death induced by cell death-inducing proteins. This Plasmopara viticola (Downy mildew of grapevine) protein is Secreted RxLR effector protein 158.